The chain runs to 380 residues: Cytochrome b (380 aa).

The next 4 membrane-spanning stretches (helical) occupy residues 33-53, 77-98, 113-133, and 178-198; these read FGSLLGLCLVTQILTGLFLAM, WLIRNIHANGASFFFICLYLHI, WNIGVVLFLLVMMTAFVGYVL, and FFAFHFLFPFIIVALTVLHFF. 2 residues coordinate heme b: H83 and H97. Residues H182 and H196 each coordinate heme b. A ubiquinone is bound at residue H201. The next 4 membrane-spanning stretches (helical) occupy residues 226 to 246, 288 to 308, 320 to 340, and 347 to 367; these read YKDLFGLVLLLLALSSLSFFS, LGGVLALLASILILMLVPILH, LTQLLFWILVADVMILTWIGG, and FIAVGQIASVLYFTLFLILIP.

The protein belongs to the cytochrome b family. The cytochrome bc1 complex contains 3 respiratory subunits (MT-CYB, CYC1 and UQCRFS1), 2 core proteins (UQCRC1 and UQCRC2) and probably 6 low-molecular weight proteins. Heme b serves as cofactor.

Its subcellular location is the mitochondrion inner membrane. Its function is as follows. Component of the ubiquinol-cytochrome c reductase complex (complex III or cytochrome b-c1 complex) that is part of the mitochondrial respiratory chain. The b-c1 complex mediates electron transfer from ubiquinol to cytochrome c. Contributes to the generation of a proton gradient across the mitochondrial membrane that is then used for ATP synthesis. This Zenopsis nebulosa (Mirror dory) protein is Cytochrome b (mt-cyb).